The sequence spans 558 residues: Phosphatidylserine lipase ABHD16A (558 aa).

Transmembrane regions (helical) follow at residues 60-80 and 93-113; these read ILAL…FAFF and VVPF…VACL. The Cytoplasmic segment spans residues 114 to 558; the sequence is RGIGRWTNPQ…AQNFQMPWHL (445 aa). Positions 281–407 constitute an AB hydrolase-1 domain; the sequence is LVICCEGNAG…LVTRTVRQHL (127 aa). Active-site charge relay system residues include S355, D430, and H507.

It belongs to the AB hydrolase superfamily. ABHD16 family.

It is found in the membrane. It catalyses the reaction 1-heptadecanoyl-2-(5Z,8Z,11Z,14Z-eicosatetraenoyl)-sn-glycero-3-phosphoserine + H2O = 1-heptadecanoyl-sn-glycero-3-phosphoserine + (5Z,8Z,11Z,14Z)-eicosatetraenoate + H(+). The enzyme catalyses 1-hexadecanoyl-2-(9Z-octadecenoyl)-sn-glycero-3-phospho-L-serine + H2O = 1-hexadecanoyl-sn-glycero-3-phospho-L-serine + (9Z)-octadecenoate + H(+). The catalysed reaction is 1-octadecanoyl-2-(9Z,12Z-octadecadienoyl)-sn-glycero-3-phosphoserine + H2O = 1-octadecanoyl-sn-glycero-3-phosphoserine + (9Z,12Z)-octadecadienoate + H(+). It carries out the reaction 1-heptadecanoyl-2-(5Z,8Z,11Z,14Z-eicosatetraenoyl)-sn-glycero-3-phosphocholine + H2O = 1-heptadecanoyl-sn-glycero-3-phosphocholine + (5Z,8Z,11Z,14Z)-eicosatetraenoate + H(+). It catalyses the reaction 1-hexadecanoyl-2-(9Z-octadecenoyl)-sn-glycero-3-phosphoglycerol + H2O = 1-hexadecanoyl-sn-glycero-3-phosphoglycerol + (9Z)-octadecenoate + H(+). The enzyme catalyses 1-hexadecanoyl-2-(9Z-octadecenoyl)-sn-glycero-3-phospho-(1D-myo-inositol) + H2O = 1-hexadecanoyl-sn-glycero-3-phospho-(1D-myo-inositol) + (9Z)-octadecenoate + H(+). The catalysed reaction is 1-heptadecanoyl-2-(5Z,8Z,11Z,14Z-eicosatetraenoyl)-sn-glycero-3-phosphoethanolamine + H2O = 1-heptadecanoyl-sn-glycero-3-phosphoethanolamine + (5Z,8Z,11Z,14Z)-eicosatetraenoate + H(+). It carries out the reaction 1-hexadecanoyl-2-(9Z-octadecenoyl)-sn-glycero-3-phospho-(1'-sn-glycerol) + H2O = 1-hexadecanoyl-sn-glycero-3-phospho-(1'-sn-glycerol) + (9Z)-octadecenoate + H(+). It catalyses the reaction Hydrolyzes glycerol monoesters of long-chain fatty acids.. The enzyme catalyses 1-tetradecanoylglycerol + H2O = tetradecanoate + glycerol + H(+). The catalysed reaction is 2-hexadecanoylglycerol + H2O = glycerol + hexadecanoate + H(+). It carries out the reaction 1-(9Z-octadecenoyl)-glycerol + H2O = glycerol + (9Z)-octadecenoate + H(+). It catalyses the reaction 2-(9Z-octadecenoyl)-glycerol + H2O = glycerol + (9Z)-octadecenoate + H(+). The enzyme catalyses 2-(9Z,12Z-octadecadienoyl)-glycerol + H2O = (9Z,12Z)-octadecadienoate + glycerol + H(+). The catalysed reaction is 1-(5Z,8Z,11Z,14Z-eicosatetraenoyl)-glycerol + H2O = glycerol + (5Z,8Z,11Z,14Z)-eicosatetraenoate + H(+). It carries out the reaction 2-(5Z,8Z,11Z,14Z-eicosatetraenoyl)-glycerol + H2O = glycerol + (5Z,8Z,11Z,14Z)-eicosatetraenoate + H(+). It catalyses the reaction prostaglandin D2-1-glycerol ester + H2O = prostaglandin D2 + glycerol + H(+). The enzyme catalyses 2-glyceryl-15-deoxy-Delta(12,14)-prostaglandin J2 + H2O = 15-deoxy-Delta(12,14)-prostaglandin J2 + glycerol + H(+). The catalysed reaction is 1-(9Z,12Z-octadecadienoyl)-glycerol + H2O = (9Z,12Z)-octadecadienoate + glycerol + H(+). Phosphatidylserine (PS) lipase that mediates the hydrolysis of phosphatidylserine to generate lysophosphatidylserine (LPS). LPS constitutes a class of signaling lipids that regulates immunological and neurological processes. Has no activity towards diacylglycerol, triacylglycerol or lysophosphatidylserine lipase. Also has monoacylglycerol lipase activity, with preference for 1-(9Z,12Z-octadecadienoyl)-glycerol (1-LG) and 2-glyceryl-15-deoxy-Delta(12,14)-prostaglandin J2 (15d-PGJ(2)-G). This chain is Phosphatidylserine lipase ABHD16A, found in Macaca fascicularis (Crab-eating macaque).